The chain runs to 314 residues: tRNA pseudouridine synthase B (314 aa).

Residue His43 participates in substrate binding. Asp48 serves as the catalytic Nucleophile. Substrate-binding residues include Tyr76, Tyr179, and Leu200.

It belongs to the pseudouridine synthase TruB family. Type 1 subfamily.

The enzyme catalyses uridine(55) in tRNA = pseudouridine(55) in tRNA. Its function is as follows. Responsible for synthesis of pseudouridine from uracil-55 in the psi GC loop of transfer RNAs. The sequence is that of tRNA pseudouridine synthase B from Shigella flexneri.